A 105-amino-acid polypeptide reads, in one-letter code: Replication restart protein PriB (105 aa).

Positions 1 to 102 (MTTNRLVLSG…LHAEQIEFID (102 aa)) constitute an SSB domain.

The protein belongs to the PriB family. In terms of assembly, homodimer. Interacts with PriA and DnaT. Component of the replication restart primosome. Primosome assembly occurs via a 'hand-off' mechanism. PriA binds to replication forks, subsequently PriB then DnaT bind; DnaT then displaces ssDNA to generate the helicase loading substrate.

Involved in the restart of stalled replication forks, which reloads the replicative helicase on sites other than the origin of replication; the PriA-PriB pathway is the major replication restart pathway. During primosome assembly it facilitates complex formation between PriA and DnaT on DNA; stabilizes PriA on DNA. Stimulates the DNA unwinding activity of PriA helicase. This chain is Replication restart protein PriB, found in Yersinia pseudotuberculosis serotype O:1b (strain IP 31758).